The chain runs to 340 residues: GTP 3',8-cyclase (340 aa).

The Radical SAM core domain maps to 8–227 (KLGRPIRDLR…DMIESHFDIE (220 aa)). Position 17 (Arg-17) interacts with GTP. Positions 24 and 28 each coordinate [4Fe-4S] cluster. Tyr-30 is an S-adenosyl-L-methionine binding site. Cys-31 contributes to the [4Fe-4S] cluster binding site. Arg-71 is a binding site for GTP. Gly-75 contributes to the S-adenosyl-L-methionine binding site. Thr-102 is a GTP binding site. Residue Ser-126 coordinates S-adenosyl-L-methionine. GTP is bound at residue Lys-163. S-adenosyl-L-methionine is bound at residue Met-197. [4Fe-4S] cluster contacts are provided by Cys-261 and Cys-264. 266-268 (RAR) provides a ligand contact to GTP. Cys-278 lines the [4Fe-4S] cluster pocket.

This sequence belongs to the radical SAM superfamily. MoaA family. As to quaternary structure, monomer and homodimer. [4Fe-4S] cluster is required as a cofactor.

It carries out the reaction GTP + AH2 + S-adenosyl-L-methionine = (8S)-3',8-cyclo-7,8-dihydroguanosine 5'-triphosphate + 5'-deoxyadenosine + L-methionine + A + H(+). Its pathway is cofactor biosynthesis; molybdopterin biosynthesis. In terms of biological role, catalyzes the cyclization of GTP to (8S)-3',8-cyclo-7,8-dihydroguanosine 5'-triphosphate. The chain is GTP 3',8-cyclase from Staphylococcus haemolyticus (strain JCSC1435).